The sequence spans 339 residues: Methionine import ATP-binding protein MetN 1 (339 aa).

One can recognise an ABC transporter domain in the interval 2–241 (ISFNNVSKVY…PKTKTTQNFV (240 aa)). 38-45 (GFSGAGKS) lines the ATP pocket.

The protein belongs to the ABC transporter superfamily. Methionine importer (TC 3.A.1.24) family. The complex is composed of two ATP-binding proteins (MetN), two transmembrane proteins (MetI) and a solute-binding protein (MetQ).

The protein localises to the cell membrane. It carries out the reaction L-methionine(out) + ATP + H2O = L-methionine(in) + ADP + phosphate + H(+). It catalyses the reaction D-methionine(out) + ATP + H2O = D-methionine(in) + ADP + phosphate + H(+). Part of the ABC transporter complex MetNIQ involved in methionine import. Responsible for energy coupling to the transport system. The sequence is that of Methionine import ATP-binding protein MetN 1 from Bacillus thuringiensis subsp. konkukian (strain 97-27).